Reading from the N-terminus, the 149-residue chain is Nucleoside diphosphate kinase (149 aa).

Residues Lys9, Phe57, Arg85, Thr91, Arg102, and Asn112 each contribute to the ATP site. His115 serves as the catalytic Pros-phosphohistidine intermediate.

The protein belongs to the NDK family. Requires Mg(2+) as cofactor.

The protein resides in the cytoplasm. The enzyme catalyses a 2'-deoxyribonucleoside 5'-diphosphate + ATP = a 2'-deoxyribonucleoside 5'-triphosphate + ADP. It carries out the reaction a ribonucleoside 5'-diphosphate + ATP = a ribonucleoside 5'-triphosphate + ADP. Major role in the synthesis of nucleoside triphosphates other than ATP. The ATP gamma phosphate is transferred to the NDP beta phosphate via a ping-pong mechanism, using a phosphorylated active-site intermediate. In Methanocorpusculum labreanum (strain ATCC 43576 / DSM 4855 / Z), this protein is Nucleoside diphosphate kinase.